The chain runs to 295 residues: Probable deoxyhypusine synthase (295 aa).

The Nucleophile role is filled by Lys267.

It belongs to the deoxyhypusine synthase family. NAD(+) is required as a cofactor.

The catalysed reaction is [eIF5A protein]-L-lysine + spermidine = [eIF5A protein]-deoxyhypusine + propane-1,3-diamine. It functions in the pathway protein modification; eIF5A hypusination. Catalyzes the NAD-dependent oxidative cleavage of spermidine and the subsequent transfer of the butylamine moiety of spermidine to the epsilon-amino group of a specific lysine residue of the eIF-5A precursor protein to form the intermediate deoxyhypusine residue. The polypeptide is Probable deoxyhypusine synthase (Pyrobaculum calidifontis (strain DSM 21063 / JCM 11548 / VA1)).